The chain runs to 191 residues: MEPIRVIESRTVVLPRENVDTDQIIPARFLKVTDKKGLGKALFSDWRYAADGAPRPDFVMNRPEAQGCSILVAGDNFGCGSSREHAPWALVDAGVRAVISTRIADIFRNNALKNGLVPVVLDAASHAKLLAAPGASVRVDVEAQTVTLPDGSTAQFPLDGFARYCLLNGVDELGFLLAQEADIAAFEGGRR.

The protein belongs to the LeuD family. LeuD type 1 subfamily. In terms of assembly, heterodimer of LeuC and LeuD.

It carries out the reaction (2R,3S)-3-isopropylmalate = (2S)-2-isopropylmalate. It functions in the pathway amino-acid biosynthesis; L-leucine biosynthesis; L-leucine from 3-methyl-2-oxobutanoate: step 2/4. Functionally, catalyzes the isomerization between 2-isopropylmalate and 3-isopropylmalate, via the formation of 2-isopropylmaleate. The chain is 3-isopropylmalate dehydratase small subunit from Anaeromyxobacter dehalogenans (strain 2CP-1 / ATCC BAA-258).